The primary structure comprises 378 residues: 7-methylxanthine methyltransferase 1 (378 aa).

S-adenosyl-L-homocysteine contacts are provided by Y18, C61, N66, D100, L101, S139, F140, and C156. 3 residues coordinate theobromine: Y157, H160, and W161. Residues N178, D260, F262, and N263 each coordinate Mg(2+). Y362 serves as a coordination point for theobromine.

This sequence belongs to the methyltransferase superfamily. Type-7 methyltransferase family. Mg(2+) is required as a cofactor. As to expression, mainly expressed, at low levels, in leaves and fruits (grains). Also present, at lower levels, in roots, stamens and pistils.

It is found in the cytoplasm. It catalyses the reaction 7-methylxanthine + S-adenosyl-L-methionine = theobromine + S-adenosyl-L-homocysteine + H(+). It participates in alkaloid biosynthesis. Its function is as follows. Involved in the biosynthesis of caffeine. Catalyzes the conversion of 7-methylxanthine (7mX) to theobromine and of paraxanthine to caffeine. The protein is 7-methylxanthine methyltransferase 1 of Coffea canephora (Robusta coffee).